An 884-amino-acid polypeptide reads, in one-letter code: MSTRRVYFFGETPENQPANSELCRKVLGGKGISLAAMIKLGMPVPLGFTITCQTCVEYQKTASWPKGLKEEVASNLKLLEEKMGKTFGDNTNPLLVSVRSGAAVSMPGMMDTILNLGLNDESVKGLAAVTGNARFAYDSYRRFMQMFGDVCLGIDHDKFEHALDAVKTRYGRKTDPELTADELEEVCEAYRKICVAATGKTFPQCPHEQLELAINAVFKSWTNPRAQAYRTLNKLDHNMGTAVNVQSMVFGNTGDDSGTGVGFTRCPKTGEKFSYLYGEFLQNAQGEDVVAGIRTPVNLKEMPTINASWKACYDELSLIYAKLEGYYNDMVDLEFTVENGKLWMLQARAGKRTGFAMVRIAIDMCKEGMLTEEEALLRIDANKINEFLFKRFDPSVKPVVLGKGIPASPGAAVGVICFCPMRTCELAEQGKKVILTRIETSPEDILGMDRAVGILTARGGQTSHAAVVARGMGKCCVAGADCCQINYATKTLVIGDRKFKEGDFISINGTTGEIYNGAVQTIEPGITDDLQTIMDWSDKYRVLKIRTNADTPHDAAVARKFGAEGIGLCRTEHMFFAADRIMAMREMILSDDEGARRTALNKLLPFQREDFIGIFKAMDGKGVNIRLLDPPLHEFLPHTRDLQKKLAEDMNKKHRHIHERVEDLHEVNPMLGFRGVRLGIVYPEISEMQVRAILEAACIVSREGVTVKPEIMIPVLFSENEMEIMHALVNRVAASVFKEHGTTVDYEVGTMIELPRACVMADKIAQTAQYFSFGTNDLTQTTFGISRDDAGKFIPKYIDRGIFKVDPFVTLDQQGVGALMKMAIEGGRSTRTDMKIGICGEQTDPASILFLHKIGLNYVSCSPYRVPVARVAAAIAAIKARTNQ.

The tract at residues Met-1–Lys-351 is N-terminal. Arg-99 is a binding site for ATP. A linker 1 region spans residues Arg-352–Ser-408. The tract at residues Pro-409–Ile-507 is central. The residue at position 462 (Thr-462) is a Phosphothreonine; by PDRP1. His-464 serves as the catalytic Tele-phosphohistidine intermediate. The interval Asn-508 to Val-542 is linker 2. The interval Leu-543–Gln-884 is C-terminal. Positions 570, 626, 753, 774, 775, 776, and 777 each coordinate substrate. Mg(2+) is bound at residue Glu-753. Asp-777 contributes to the Mg(2+) binding site. The active-site Proton donor is the Cys-839.

This sequence belongs to the PEP-utilizing enzyme family. Homodimer. Mg(2+) is required as a cofactor. Post-translationally, phosphorylation of Thr-462 in the dark inactivates the enzyme. Dephosphorylation upon light stimulation reactivates the enzyme.

The enzyme catalyses pyruvate + phosphate + ATP = phosphoenolpyruvate + AMP + diphosphate + H(+). Its activity is regulated as follows. Activated by light-induced dephosphorylation. Inhibited by dark-induced phosphorylation. Both reactions are catalyzed by PDRP1. Catalyzes the reversible phosphorylation of pyruvate and phosphate. This is Pyruvate, phosphate dikinase from Giardia intestinalis (Giardia lamblia).